A 119-amino-acid polypeptide reads, in one-letter code: Flagellar transcriptional regulator FlhD (119 aa).

It belongs to the FlhD family. Homodimer; disulfide-linked. Forms a heterohexamer composed of two FlhC and four FlhD subunits. Each FlhC binds a FlhD dimer, forming a heterotrimer, and a hexamer assembles by dimerization of two heterotrimers.

The protein localises to the cytoplasm. Functionally, functions in complex with FlhC as a master transcriptional regulator that regulates transcription of several flagellar and non-flagellar operons by binding to their promoter region. Activates expression of class 2 flagellar genes, including fliA, which is a flagellum-specific sigma factor that turns on the class 3 genes. Also regulates genes whose products function in a variety of physiological pathways. This Enterobacter sp. (strain 638) protein is Flagellar transcriptional regulator FlhD.